The primary structure comprises 333 residues: Fatty acid hydroxylase domain-containing protein 2 (333 aa).

The next 6 membrane-spanning stretches (helical) occupy residues 29–49 (FILGSGLLSFVAFWNSVTWHL), 77–97 (ILFFIGAIQVPCLFFWSFNGL), 134–154 (TVLFNQCMVSFPMVVFLYPFL), 168–188 (FHWFLLELAIFTLIEEVLFYY), 215–235 (VISLYAHPIEHVVSNMLPAIV), and 237–257 (PLVMGSHLSSITMWFSLALII). Residues 176 to 299 (AIFTLIEEVL…LGVLDHLHGT (124 aa)) form the Fatty acid hydroxylase domain.

Belongs to the sterol desaturase family.

Its subcellular location is the cytoplasm. It is found in the membrane. Promotes megakaryocyte differentiation by enhancing ERK phosphorylation and up-regulating RUNX1 expression. In Macaca fascicularis (Crab-eating macaque), this protein is Fatty acid hydroxylase domain-containing protein 2 (FAXDC2).